Here is a 172-residue protein sequence, read N- to C-terminus: Translation initiation factor IF-3 (172 aa).

The protein belongs to the IF-3 family. In terms of assembly, monomer.

The protein resides in the cytoplasm. In terms of biological role, IF-3 binds to the 30S ribosomal subunit and shifts the equilibrium between 70S ribosomes and their 50S and 30S subunits in favor of the free subunits, thus enhancing the availability of 30S subunits on which protein synthesis initiation begins. This Bartonella quintana (strain Toulouse) (Rochalimaea quintana) protein is Translation initiation factor IF-3.